The primary structure comprises 124 residues: Ribonuclease P protein component (124 aa).

It belongs to the RnpA family. Consists of a catalytic RNA component (M1 or rnpB) and a protein subunit.

It carries out the reaction Endonucleolytic cleavage of RNA, removing 5'-extranucleotides from tRNA precursor.. RNaseP catalyzes the removal of the 5'-leader sequence from pre-tRNA to produce the mature 5'-terminus. It can also cleave other RNA substrates such as 4.5S RNA. The protein component plays an auxiliary but essential role in vivo by binding to the 5'-leader sequence and broadening the substrate specificity of the ribozyme. The protein is Ribonuclease P protein component of Mycolicibacterium gilvum (strain PYR-GCK) (Mycobacterium gilvum (strain PYR-GCK)).